The following is a 585-amino-acid chain: Lipoprotein LpqB (585 aa).

A signal peptide spans M1–G17. C18 is lipidated: N-palmitoyl cysteine. C18 carries S-diacylglycerol cysteine lipidation. Disordered stretches follow at residues S24–P46 and P560–G585.

Belongs to the LpqB lipoprotein family.

The protein localises to the cell membrane. This chain is Lipoprotein LpqB, found in Mycobacterium paratuberculosis.